The following is a 556-amino-acid chain: Phenylalanine--tRNA ligase beta subunit (556 aa).

Positions His-274–Tyr-349 constitute a B5 domain. Positions 327, 333, 336, and 337 each coordinate Mg(2+).

This sequence belongs to the phenylalanyl-tRNA synthetase beta subunit family. Type 2 subfamily. As to quaternary structure, tetramer of two alpha and two beta subunits. Requires Mg(2+) as cofactor.

The protein resides in the cytoplasm. The catalysed reaction is tRNA(Phe) + L-phenylalanine + ATP = L-phenylalanyl-tRNA(Phe) + AMP + diphosphate + H(+). This Korarchaeum cryptofilum (strain OPF8) protein is Phenylalanine--tRNA ligase beta subunit.